The following is a 156-amino-acid chain: UPF0266 membrane protein YobD (156 aa).

Residues 1–5 (MTITD) are Periplasmic-facing. Residues 6–26 (LVLILFIAALLAYALYDQFIM) traverse the membrane as a helical segment. The Cytoplasmic portion of the chain corresponds to 27–44 (PRRNGPTLLSIALLRRGR). The chain crosses the membrane as a helical span at residues 45–65 (VDSVIFVGLVAILIYNNVTSH). Gly66 is a topological domain (periplasmic). The helical transmembrane segment at 67–87 (AQMTTWLLSALALMGFYIFWI) threads the bilayer. Topologically, residues 88–156 (RTPRIIFKQR…LLIENQYLKI (69 aa)) are cytoplasmic.

It belongs to the UPF0266 family.

Its subcellular location is the cell inner membrane. This is UPF0266 membrane protein YobD (yobD) from Salmonella typhimurium (strain LT2 / SGSC1412 / ATCC 700720).